Consider the following 118-residue polypeptide: UPF0102 protein Franean1_1156 (118 aa).

It belongs to the UPF0102 family.

In Parafrankia sp. (strain EAN1pec), this protein is UPF0102 protein Franean1_1156.